The chain runs to 377 residues: Protein MULTIPOLAR SPINDLE 1 (377 aa).

The Nuclear localization signal motif lies at 117 to 124; that stretch reads LRRRFLRL.

Expressed in roots, stems, leaves, inflorescences and seedlings. Strongly expressed in meiocytes.

It localises to the nucleus. Its subcellular location is the cytoplasm. It is found in the cytoskeleton. The protein localises to the spindle. Its function is as follows. Involved in meiotic spindle organization in meiocytes thus regulating chromosome segregation. Required for formation of meiotic DNA double-strand breaks (DSBs) during early recombination processes. The polypeptide is Protein MULTIPOLAR SPINDLE 1 (Arabidopsis thaliana (Mouse-ear cress)).